The following is a 144-amino-acid chain: Deoxyuridine 5'-triphosphate nucleotidohydrolase (144 aa).

Substrate is bound by residues 63-65 (RSG), N76, 80-82 (TID), and K90.

Belongs to the dUTPase family. Requires Mg(2+) as cofactor.

It catalyses the reaction dUTP + H2O = dUMP + diphosphate + H(+). It functions in the pathway pyrimidine metabolism; dUMP biosynthesis; dUMP from dCTP (dUTP route): step 2/2. In terms of biological role, this enzyme is involved in nucleotide metabolism: it produces dUMP, the immediate precursor of thymidine nucleotides and it decreases the intracellular concentration of dUTP so that uracil cannot be incorporated into DNA. The protein is Deoxyuridine 5'-triphosphate nucleotidohydrolase of Hydrogenobaculum sp. (strain Y04AAS1).